We begin with the raw amino-acid sequence, 38 residues long: Trypsin inhibitor 2 (38 aa).

Gln-1 carries the pyrrolidone carboxylic acid modification.

Post-translationally, contains disulfide bonds.

Inhibits trypsin-like proteases from the guts of the insect pests P.truncatus, P.americana, Acheta sp and Gryllus sp. This chain is Trypsin inhibitor 2, found in Opuntia streptacantha (Prickly pear cactus).